The sequence spans 78 residues: MIIPWQQVDSETLDNLLEAFVLREGTDYGEHERSLTEKVADVRRQLVSGEAVLVWSELHETINIMPRGSFHAGAEEQQ.

It belongs to the UPF0270 family.

The polypeptide is UPF0270 protein YPTB3725 (Yersinia pseudotuberculosis serotype I (strain IP32953)).